Reading from the N-terminus, the 224-residue chain is 4-aminobenzoate synthase (224 aa).

Fe(2+)-binding residues include Glu-77, His-84, Glu-138, His-169, Asp-173, and His-176.

It belongs to the CADD family. In terms of assembly, homodimer. It depends on Fe(2+) as a cofactor. The cofactor is Mn(2+).

Involved in de novo para-aminobenzoate (PABA) biosynthesis. Acts as a self-sacrificing or 'suicide' enzyme that utilizes its own active site tyrosine residue(s) as the substrate for PABA synthesis. The side chain of the tyrosine residue is released from the protein backbone via cleavage of the C(alpha)-C(beta) bond, leaving a glycine in place of the original tyrosine residue. Reaction requires O(2) and a reduced dimetal cofactor. This chain is 4-aminobenzoate synthase, found in Chlamydia pneumoniae (Chlamydophila pneumoniae).